Reading from the N-terminus, the 243-residue chain is NAD-dependent protein deacetylase (243 aa).

The region spanning 1 to 243 is the Deacetylase sirtuin-type domain; sequence MRNDLETLKH…VSVVKSLMTE (243 aa). 7 residues coordinate NAD(+): A24, F35, R36, Q105, I107, D108, and H123. F35 is a binding site for nicotinamide. The nicotinamide site is built by I107 and D108. H123 (proton acceptor) is an active-site residue. Residues C131, C134, C151, and C154 each contribute to the Zn(2+) site. The NAD(+) site is built by S192, S193, N215, and D232.

The protein belongs to the sirtuin family. Class U subfamily. Requires Zn(2+) as cofactor.

The protein localises to the cytoplasm. The catalysed reaction is N(6)-acetyl-L-lysyl-[protein] + NAD(+) + H2O = 2''-O-acetyl-ADP-D-ribose + nicotinamide + L-lysyl-[protein]. In terms of biological role, NAD-dependent protein deacetylase which modulates the activities of several enzymes which are inactive in their acetylated form. This chain is NAD-dependent protein deacetylase, found in Staphylococcus aureus (strain MSSA476).